A 286-amino-acid chain; its full sequence is Sulfur carrier protein FdhD (286 aa).

The active-site Cysteine persulfide intermediate is the C110. 247–252 (FARGEK) contributes to the Mo-bis(molybdopterin guanine dinucleotide) binding site.

Belongs to the FdhD family.

It is found in the cytoplasm. In terms of biological role, required for formate dehydrogenase (FDH) activity. Acts as a sulfur carrier protein that transfers sulfur from IscS to the molybdenum cofactor prior to its insertion into FDH. This is Sulfur carrier protein FdhD from Wolinella succinogenes (strain ATCC 29543 / DSM 1740 / CCUG 13145 / JCM 31913 / LMG 7466 / NCTC 11488 / FDC 602W) (Vibrio succinogenes).